A 136-amino-acid polypeptide reads, in one-letter code: Ribulose bisphosphate carboxylase small subunit, chloroplastic 1 (136 aa).

The transit peptide at 1–13 directs the protein to the chloroplast; that stretch reads NTDITSNGERVKC.

This sequence belongs to the RuBisCO small chain family. Heterohexadecamer of 8 large and 8 small subunits.

Its subcellular location is the plastid. It localises to the chloroplast. Functionally, ruBisCO catalyzes two reactions: the carboxylation of D-ribulose 1,5-bisphosphate, the primary event in carbon dioxide fixation, as well as the oxidative fragmentation of the pentose substrate. Both reactions occur simultaneously and in competition at the same active site. Although the small subunit is not catalytic it is essential for maximal activity. In Pisum sativum (Garden pea), this protein is Ribulose bisphosphate carboxylase small subunit, chloroplastic 1.